The primary structure comprises 49 residues: YLDPGLGAPAPYPDPLEPKREVCELNPDCDELADHIGFQEAYRRFYGIA.

The 47-residue stretch at 1–47 (YLDPGLGAPAPYPDPLEPKREVCELNPDCDELADHIGFQEAYRRFYG) folds into the Gla domain. Pro9 carries the hydroxyproline modification. Glu17, Glu21, Glu24, and Asp30 together coordinate Ca(2+). 4-carboxyglutamate is present on residues Glu17, Glu21, and Glu24. A disulfide bond links Cys23 and Cys29.

Belongs to the osteocalcin/matrix Gla protein family. Gamma-carboxyglutamate residues are formed by vitamin K dependent carboxylation by GGCX. These residues are essential for the binding of calcium. Decarboxylation promotes the hormone activity.

It localises to the secreted. The carboxylated form is one of the main organic components of the bone matrix, which constitutes 1-2% of the total bone protein. It acts as a negative regulator of bone formation and is required to limit bone formation without impairing bone resorption or mineralization. The carboxylated form binds strongly to apatite and calcium. Its function is as follows. The uncarboxylated form acts as a hormone secreted by osteoblasts, which regulates different cellular processes, such as energy metabolism, male fertility and brain development. Regulates of energy metabolism by acting as a hormone favoring pancreatic beta-cell proliferation, insulin secretion and sensitivity and energy expenditure. Uncarboxylated osteocalcin hormone also promotes testosterone production in the testes: acts as a ligand for G protein-coupled receptor GPRC6A at the surface of Leydig cells, initiating a signaling response that promotes the expression of enzymes required for testosterone synthesis in a CREB-dependent manner. Also acts as a regulator of brain development: osteocalcin hormone crosses the blood-brain barrier and acts as a ligand for GPR158 on neurons, initiating a signaling response that prevents neuronal apoptosis in the hippocampus, favors the synthesis of all monoamine neurotransmitters and inhibits that of gamma-aminobutyric acid (GABA). Osteocalcin also crosses the placenta during pregnancy and maternal osteocalcin is required for fetal brain development. The sequence is that of Osteocalcin (BGLAP) from Capra hircus (Goat).